A 75-amino-acid chain; its full sequence is Putative membrane protein insertion efficiency factor 2 (75 aa).

It belongs to the UPF0161 family.

The protein localises to the cell membrane. Could be involved in insertion of integral membrane proteins into the membrane. In Bacillus licheniformis (strain ATCC 14580 / DSM 13 / JCM 2505 / CCUG 7422 / NBRC 12200 / NCIMB 9375 / NCTC 10341 / NRRL NRS-1264 / Gibson 46), this protein is Putative membrane protein insertion efficiency factor 2.